The chain runs to 75 residues: Disintegrin CTF-II (75 aa).

Residues 1–75 enclose the Disintegrin domain; that stretch reads ELLEEGEDCY…SDDCPRWNDL (75 aa). Intrachain disulfides connect Cys-9–Cys-24, Cys-11–Cys-19, Cys-18–Cys-41, Cys-32–Cys-38, Cys-37–Cys-62, and Cys-50–Cys-69. A Cell attachment site motif is present at residues 54–56; sequence RGD.

Belongs to the venom metalloproteinase (M12B) family. P-II subfamily. P-IIa sub-subfamily. In terms of assembly, monomer (disintegrin). Expressed by the venom gland.

It is found in the secreted. In terms of biological role, inhibits fibrinogen interaction with platelet receptors, and inhibits aggregation induced by ADP, thrombin, collagen and platelet-activating factor. Acts by binding to the alpha-IIb/beta-3 (ITGA2B/ITGB3) on the platelet surface. This is Disintegrin CTF-II from Protobothrops flavoviridis (Habu).